The primary structure comprises 339 residues: Anthranilate phosphoribosyltransferase (339 aa).

Residues Gly-81, 84 to 85, Ser-89, 91 to 94, 109 to 117, and Ala-121 each bind 5-phospho-alpha-D-ribose 1-diphosphate; these read GD, NVST, and KHGNRALSS. Gly-81 contacts anthranilate. Ser-93 serves as a coordination point for Mg(2+). Residue Asn-112 coordinates anthranilate. Position 167 (Arg-167) interacts with anthranilate. 2 residues coordinate Mg(2+): Asp-226 and Glu-227.

The protein belongs to the anthranilate phosphoribosyltransferase family. In terms of assembly, homodimer. Mg(2+) is required as a cofactor.

The enzyme catalyses N-(5-phospho-beta-D-ribosyl)anthranilate + diphosphate = 5-phospho-alpha-D-ribose 1-diphosphate + anthranilate. The protein operates within amino-acid biosynthesis; L-tryptophan biosynthesis; L-tryptophan from chorismate: step 2/5. Functionally, catalyzes the transfer of the phosphoribosyl group of 5-phosphorylribose-1-pyrophosphate (PRPP) to anthranilate to yield N-(5'-phosphoribosyl)-anthranilate (PRA). The sequence is that of Anthranilate phosphoribosyltransferase from Rhodopseudomonas palustris (strain BisB18).